The chain runs to 601 residues: MSSGYSSAPSVSHTSSDTDLNRIDSYDDGAEETTDEQRMCGLSELVTSCLTSSRLKAIDEEDEEENCNDIEIVGLSKTTTKVKRSKKVLSCPIVSSSTKKENGNAAPFLKSSQFTDVPPTIRFYTKGTKVTKPARKIQARLTWCHNSLLPIVMRQTLAASHFTVVDESLFYVGYWGRHLKSAQYRALQPHQKVNHFPGAFHIGRKDRLWMHIRKQQERFEGEFDIMPFTYILPTDRQELLKYLETDASRHVIVKPPASARGTGISVTRKPKDFPTTATLVAQHYIERPLTINRAKFDLRLYAYVPTFEPLRVYIYDQGLVRFASVPYSHSVSTISNKYMHLTNYSINKLAEADGVANKPVPKWTLHHLWEHFDEMGVDREKIQREIEEVIIKAFISTEKPIREHMSRFLEQEFICYELFGIDIILDEDYKPWLLEVNISPSLHSGTPLDVSVKAPLAKDVLNLAGVYVPPSFDKLSDADYSTRPRNGRKNREQLIKEASWVAAYKDQLGVIDNRIFKRLTPEDTRALVEFEDELERIGDFKLVFPTAHTSHYQKYFAETIYMNILLQQWQIAQEDDRSIGINRLEQLCRQKHMQSDQETSF.

Positions 1–18 (MSSGYSSAPSVSHTSSDT) are enriched in polar residues. The segment at 1-37 (MSSGYSSAPSVSHTSSDTDLNRIDSYDDGAEETTDEQ) is disordered. The TTL domain occupies 138 to 476 (QARLTWCHNS…YVPPSFDKLS (339 aa)). ATP is bound by residues K254, 260 to 261 (RG), 282 to 285 (QHYI), and 295 to 297 (KFD). Residue R260 participates in a protein binding. R321 is a binding site for L-glutamate. 342–343 (TN) contacts ATP. 3 residues coordinate L-glutamate: Y344, S345, and K362. Residues D422, E435, and N437 each coordinate Mg(2+). K453 contributes to the L-glutamate binding site.

This sequence belongs to the tubulin--tyrosine ligase family. The cofactor is Mg(2+). As to expression, expressed in many sensory neurons in amphid.

It catalyses the reaction L-glutamyl-[protein] + L-glutamate + ATP = gamma-L-glutamyl-L-glutamyl-[protein] + ADP + phosphate + H(+). Monoglutamylase which modifies tubulin, adding a single glutamate on the gamma-carboxyl group of specific glutamate residues of target proteins. Involved in the side-chain initiation step of the polyglutamylation reaction but not in the elongation step. Preferentially modifies beta-tail tubulin over the alpha-tubulin. Involved in side-chain glutamylation of tubulin in sensory cilia. Together with ttll-5 and ttll-11, required for male mating. In Caenorhabditis elegans, this protein is Tubulin polyglutamylase ttll-4.